We begin with the raw amino-acid sequence, 294 residues long: Nucleotide-binding protein Adeh_0147 (294 aa).

17 to 24 (GVSGSGKS) lines the ATP pocket. 68–71 (DARE) contributes to the GTP binding site.

The protein belongs to the RapZ-like family.

Functionally, displays ATPase and GTPase activities. In Anaeromyxobacter dehalogenans (strain 2CP-C), this protein is Nucleotide-binding protein Adeh_0147.